A 368-amino-acid polypeptide reads, in one-letter code: uncharacterized protein (368 aa).

It belongs to the Gfo/Idh/MocA family.

This is an uncharacterized protein from Schizosaccharomyces pombe (strain 972 / ATCC 24843) (Fission yeast).